The primary structure comprises 441 residues: Serine carboxypeptidase-like 4 (441 aa).

An N-terminal signal peptide occupies residues 1–29 (MANNNVYSVLKSLLLLLHLVFLSKQHVDS). Intrachain disulfides connect C88–C331, C252–C266, and C290–C297. Residue N109 is glycosylated (N-linked (GlcNAc...) asparagine). The active site involves S184. N-linked (GlcNAc...) asparagine glycosylation is present at N350. D366 is a catalytic residue. N382 is a glycosylation site (N-linked (GlcNAc...) asparagine). H419 is a catalytic residue.

The protein belongs to the peptidase S10 family. Ubiquitous.

The protein localises to the secreted. Functionally, probable carboxypeptidase. The polypeptide is Serine carboxypeptidase-like 4 (SCPL4) (Arabidopsis thaliana (Mouse-ear cress)).